A 393-amino-acid polypeptide reads, in one-letter code: uncharacterized protein (393 aa).

Positions 164-183 (ASDPHPGKNSPASPTGENKE) are disordered. Residues 173-183 (SPASPTGENKE) are compositionally biased toward polar residues.

This is an uncharacterized protein from Treponema pallidum (strain Nichols).